The sequence spans 177 residues: Large ribosomal subunit protein uL6 (177 aa).

The protein belongs to the universal ribosomal protein uL6 family. As to quaternary structure, part of the 50S ribosomal subunit.

Functionally, this protein binds to the 23S rRNA, and is important in its secondary structure. It is located near the subunit interface in the base of the L7/L12 stalk, and near the tRNA binding site of the peptidyltransferase center. The protein is Large ribosomal subunit protein uL6 of Histophilus somni (strain 129Pt) (Haemophilus somnus).